Reading from the N-terminus, the 338-residue chain is Glyceraldehyde-3-phosphate dehydrogenase 2 (338 aa).

NAD(+) is bound by residues 12–13 (RI), aspartate 34, and arginine 79. D-glyceraldehyde 3-phosphate-binding positions include 150–152 (SCT), threonine 181, 210–211 (TG), and arginine 233. The Nucleophile role is filled by cysteine 151. Asparagine 315 is a binding site for NAD(+).

This sequence belongs to the glyceraldehyde-3-phosphate dehydrogenase family. In terms of assembly, homotetramer.

Its subcellular location is the cytoplasm. It catalyses the reaction D-glyceraldehyde 3-phosphate + phosphate + NAD(+) = (2R)-3-phospho-glyceroyl phosphate + NADH + H(+). The protein operates within carbohydrate degradation; glycolysis; pyruvate from D-glyceraldehyde 3-phosphate: step 1/5. The polypeptide is Glyceraldehyde-3-phosphate dehydrogenase 2 (GPD2) (Mucor circinelloides f. lusitanicus (Mucor racemosus var. lusitanicus)).